The primary structure comprises 474 residues: Trehalose-6-phosphate synthase (474 aa).

Arg-10 provides a ligand contact to D-glucose 6-phosphate. Position 22 to 23 (22 to 23 (GG)) interacts with UDP-alpha-D-glucose. Positions 77 and 131 each coordinate D-glucose 6-phosphate. Positions 263 and 268 each coordinate UDP-alpha-D-glucose. D-glucose 6-phosphate is bound at residue Arg-301. UDP-alpha-D-glucose contacts are provided by residues Phe-340 and 366-370 (LVAKE).

This sequence belongs to the glycosyltransferase 20 family. Homotetramer.

The enzyme catalyses D-glucose 6-phosphate + UDP-alpha-D-glucose = alpha,alpha-trehalose 6-phosphate + UDP + H(+). The protein operates within glycan biosynthesis; trehalose biosynthesis. In terms of biological role, probably involved in the osmoprotection via the biosynthesis of trehalose. Catalyzes the transfer of glucose from UDP-alpha-D-glucose (UDP-Glc) to D-glucose 6-phosphate (Glc-6-P) to form trehalose-6-phosphate. Acts with retention of the anomeric configuration of the UDP-sugar donor. The protein is Trehalose-6-phosphate synthase of Pseudomonas savastanoi (Pseudomonas syringae pv. savastanoi).